Here is a 249-residue protein sequence, read N- to C-terminus: Pyridoxine 5'-phosphate synthase (249 aa).

Asn7 serves as a coordination point for 3-amino-2-oxopropyl phosphate. Position 9-10 (9-10) interacts with 1-deoxy-D-xylulose 5-phosphate; that stretch reads DH. Arg18 is a 3-amino-2-oxopropyl phosphate binding site. His43 functions as the Proton acceptor in the catalytic mechanism. Residues Arg45 and His50 each coordinate 1-deoxy-D-xylulose 5-phosphate. Glu70 serves as the catalytic Proton acceptor. Residue Thr100 participates in 1-deoxy-D-xylulose 5-phosphate binding. His190 serves as the catalytic Proton donor. 3-amino-2-oxopropyl phosphate-binding positions include Gly191 and 212–213; that span reads GH.

It belongs to the PNP synthase family. As to quaternary structure, homooctamer; tetramer of dimers.

It localises to the cytoplasm. It carries out the reaction 3-amino-2-oxopropyl phosphate + 1-deoxy-D-xylulose 5-phosphate = pyridoxine 5'-phosphate + phosphate + 2 H2O + H(+). Its pathway is cofactor biosynthesis; pyridoxine 5'-phosphate biosynthesis; pyridoxine 5'-phosphate from D-erythrose 4-phosphate: step 5/5. Its function is as follows. Catalyzes the complicated ring closure reaction between the two acyclic compounds 1-deoxy-D-xylulose-5-phosphate (DXP) and 3-amino-2-oxopropyl phosphate (1-amino-acetone-3-phosphate or AAP) to form pyridoxine 5'-phosphate (PNP) and inorganic phosphate. This is Pyridoxine 5'-phosphate synthase from Synechococcus sp. (strain CC9902).